Reading from the N-terminus, the 723-residue chain is Probable C-mannosyltransferase DPY19L4 (723 aa).

A disordered region spans residues 1 to 33; it reads MAEEEGPPVELRQRKKPKSSENKESAKEEKISD. Ala2 is modified (N-acetylalanine). A compositionally biased stretch (basic and acidic residues) spans 18–32; the sequence is KSSENKESAKEEKIS. Helical transmembrane passes span 52–72, 161–178, 184–202, 222–240, 260–280, 292–310, 316–337, 349–370, 421–441, 466–486, 489–509, and 522–542; these read IFIG…YLSA, VYFY…YVTA, WLMS…WFVI, LPYF…KSNL, MMMW…LFLL, YEVY…LLQF, LVSP…QLNV, VINF…KMFV, LLPF…QVIF, IIYH…IEGL, IWIP…ELWM, and PILL…LSLW.

It belongs to the dpy-19 family. In terms of tissue distribution, widely expressed.

The protein localises to the membrane. Functionally, probable C-mannosyltransferase that mediates C-mannosylation of tryptophan residues on target proteins. The polypeptide is Probable C-mannosyltransferase DPY19L4 (DPY19L4) (Homo sapiens (Human)).